The sequence spans 356 residues: Carbohydrate sulfotransferase 10 (356 aa).

The Cytoplasmic segment spans residues M1 to L6. A helical; Signal-anchor for type II membrane protein membrane pass occupies residues L7–L27. Residues T28 to N356 are Lumenal-facing. N99 carries N-linked (GlcNAc...) asparagine glycosylation. Residues P127–Q133 and R189–S197 each bind 3'-phosphoadenylyl sulfate. N228 and N316 each carry an N-linked (GlcNAc...) asparagine glycan.

The protein belongs to the sulfotransferase 2 family. In fetal tissues, it is predominantly expressed in brain, and weakly expressed in lung, kidney and liver. In adult, it is highly expressed in brain, testis, ovary, expressed at intermediate level in heart, pancreas, skeletal muscle, spleen and thymus, and weakly expressed in other tissues. In brain, it is expressed at higher level in the frontal lobe.

The protein localises to the golgi apparatus membrane. It catalyses the reaction 3-O-{beta-D-GlcA-(1-&gt;[3)-alpha-D-Xyl-(1-&gt;3)-beta-D-GlcA-(1-&gt;](n)-4)-beta-D-Xyl-(1-&gt;4)-Rib-ol-P-Rib-ol-P-3-beta-D-GalNAc-(1-&gt;3)-beta-D-GlcNAc-(1-&gt;4)-O-6-P-alpha-D-Man}-L-Thr-[protein] + 3'-phosphoadenylyl sulfate = 3-O-{O-3-S-beta-D-GlcA-(1-&gt;[3)-alpha-D-Xyl-(1-&gt;3)-beta-D-GlcA-(1-&gt;](n)-4)-beta-D-Xyl-(1-&gt;4)-Rib-ol-P-Rib-ol-P-3-beta-D-GalNAc-(1-&gt;3)-beta-D-GlcNAc-(1-&gt;4)-O-6-P-alpha-D-Man}-L-Thr-[protein] + adenosine 3',5'-bisphosphate + H(+). The enzyme catalyses 17beta-estradiol 3-O-(beta-D-glucuronate) + 3'-phosphoadenylyl sulfate = 17beta-estradiol 3-O-(3-sulfo-beta-D-glucuronate) + adenosine 3',5'-bisphosphate + H(+). It carries out the reaction 17beta-estradiol 3-O-(beta-D-glucuronate) 17-sulfate + 3'-phosphoadenylyl sulfate = 17beta-estradiol 3-O-(3-sulfo-beta-D-glucuronate) 17-sulfate + adenosine 3',5'-bisphosphate + H(+). The catalysed reaction is 17beta-estradiol 17-O-(beta-D-glucuronate) + 3'-phosphoadenylyl sulfate = 17beta-estradiol 17-O-(3-sulfo-beta-D-glucuronate) + adenosine 3',5'-bisphosphate + H(+). It catalyses the reaction 16alpha,17beta-estriol 3-O-(beta-D-glucuronate) + 3'-phosphoadenylyl sulfate = 16alpha,17beta-estriol 3-O-(3-sulfo-beta-D-glucuronate) + adenosine 3',5'-bisphosphate + H(+). The enzyme catalyses 16alpha,17beta-estriol 16-O-(beta-D-glucuronate) + 3'-phosphoadenylyl sulfate = 16alpha,17beta-estriol 16-O-(3-sulfo-beta-D-glucuronate) + adenosine 3',5'-bisphosphate + H(+). It carries out the reaction 16alpha,17beta-estriol 17-O-(beta-D-glucuronate) + 3'-phosphoadenylyl sulfate = 16alpha,17beta-estriol 17-O-(3-sulfo-beta-D-glucuronate) + adenosine 3',5'-bisphosphate + H(+). The catalysed reaction is estrone 3-O-(beta-D-glucuronate) + 3'-phosphoadenylyl sulfate = estrone 3-O-(3-sulfo-beta-D-glucuronate) + adenosine 3',5'-bisphosphate + H(+). It catalyses the reaction 3alpha,20alpha-dihydroxy-5beta-pregnane 3-O-(beta-D-glucuronate) + 3'-phosphoadenylyl sulfate = 3alpha,20alpha-dihydroxy-5beta-pregnane 3-O-(3-sulfo-beta-D-glucuronate) + adenosine 3',5'-bisphosphate + H(+). The enzyme catalyses testosterone 17-O-(beta-D-glucuronate) + 3'-phosphoadenylyl sulfate = testosterone 17-O-(3-sulfo-beta-D-glucuronate) + adenosine 3',5'-bisphosphate + H(+). It carries out the reaction 3beta-androst-5-en-17-one 3-O-(beta-D-glucuronate) + 3'-phosphoadenylyl sulfate = 3beta-androst-5-en-17-one 3-O-(3-sulfo-beta-D-glucuronate) + adenosine 3',5'-bisphosphate + H(+). The catalysed reaction is 3alpha,17alpha-dihydroxy-5beta-androstane-11-one-17beta-carboxylate 3-O-(beta-D-glucuronate) + 3'-phosphoadenylyl sulfate = 3alpha,17alpha-dihydroxy-5beta-androstane-11-one-17beta-carboxylate 3-O-(3-sulfo-beta-D-glucuronate) + adenosine 3',5'-bisphosphate + H(+). It catalyses the reaction 3alpha-hydroxyetiocholan-17-one 3-O-(beta-D-glucuronate) + 3'-phosphoadenylyl sulfate = 3alpha-hydroxyetiocholan-17-one 3-O-(3-sulfo-beta-D-glucuronate) + adenosine 3',5'-bisphosphate + H(+). It participates in steroid metabolism. The protein operates within protein modification; carbohydrate sulfation. In terms of biological role, catalyzes the transfer of sulfate from 3'-phosphoadenylyl sulfate (PAPS) to position 3 of terminal glucuronic acid of both protein- and lipid-linked oligosaccharides. Participates in biosynthesis of HNK-1 carbohydrate structure 3-O-sulfo-beta-D-GlcA-(1-&gt;3)-beta-D-Gal-(1-&gt;4)-D-GlcNAc-R, a sulfated glucuronyl-lactosaminyl residue carried by many neural recognition molecules, which is involved in cell interactions during ontogenetic development and in synaptic plasticity in the adult. May be indirectly involved in synapse plasticity of the hippocampus, via its role in HNK-1 biosynthesis. Sulfates terminal glucuronyl residue of the laminin globular (LG)-domain binding epitope on DAG1/alpha-dystroglycan and prevents further polymerization by LARGE1 glycosyltransferase. Likely defines the chain length of LG epitope, conferring binding specificity to extracellular matrix components. Plays a role in down-regulating the steroid hormones. Sulfates glucuronidated estrogens and androgens with an impact in hormone cycle and fertility. Has a preference for glucuronyl moiety at the 3-hydroxyl group of a sterol ring rather than the 17-hydroxyl group, showing high catalytic efficiency for 17beta-estradiol 3-O-(beta-D-glucuronate) and dehydroepiandrosterone 3-O-(beta-D-glucuronate) hormones. This is Carbohydrate sulfotransferase 10 from Homo sapiens (Human).